A 267-amino-acid polypeptide reads, in one-letter code: Small ribosomal subunit protein uS3 (267 aa).

The KH type-2 domain occupies 39–114 (IRKYLETNLK…RVNINIVEIR (76 aa)). Residues 229–248 (ANNRGRGNNRGRGNSRQNGG) show a composition bias toward low complexity. The tract at residues 229–267 (ANNRGRGNNRGRGNSRQNGGRSRRPRQGQASTQGRGGNN) is disordered.

It belongs to the universal ribosomal protein uS3 family. Part of the 30S ribosomal subunit. Forms a tight complex with proteins S10 and S14.

Its function is as follows. Binds the lower part of the 30S subunit head. Binds mRNA in the 70S ribosome, positioning it for translation. This is Small ribosomal subunit protein uS3 from Oenococcus oeni (strain ATCC BAA-331 / PSU-1).